A 748-amino-acid chain; its full sequence is Subtilisin-like protease (748 aa).

The signal sequence occupies residues 1–24 (MMKMELRLLVSLIFILCSISMLAA). One can recognise an Inhibitor I9 domain in the interval 37–115 (TYIVHVKKSE…ARPERTLELH (79 aa)). Residues 122–600 (FLGLKQGQGL…AGHVNPVKAN (479 aa)) enclose the Peptidase S8 domain. Active-site charge relay system residues include Asp-147 and His-206. The PA domain maps to 365 to 454 (PLVYPGSFGY…VEVSYAAGLT (90 aa)). Asn-376, Asn-380, and Asn-405 each carry an N-linked (GlcNAc...) asparagine glycan. Ser-533 serves as the catalytic Charge relay system. N-linked (GlcNAc...) asparagine glycans are attached at residues Asn-675 and Asn-722.

This sequence belongs to the peptidase S8 family.

The protein resides in the secreted. It localises to the extracellular space. Its subcellular location is the apoplast. In terms of biological role, required for arbuscular mycorrhiza (AM) development during AM symbiosis with AM fungi (e.g. Glomeromycota intraradices). The polypeptide is Subtilisin-like protease (Medicago truncatula (Barrel medic)).